The following is a 475-amino-acid chain: Ribulose bisphosphate carboxylase large chain (475 aa).

The propeptide occupies 1 to 2; the sequence is MS. Proline 3 bears the N-acetylproline mark. At lysine 14 the chain carries N6,N6,N6-trimethyllysine. 2 residues coordinate substrate: asparagine 123 and threonine 173. Lysine 175 functions as the Proton acceptor in the catalytic mechanism. Residue lysine 177 coordinates substrate. Mg(2+) contacts are provided by lysine 201, aspartate 203, and glutamate 204. N6-carboxylysine is present on lysine 201. Histidine 294 (proton acceptor) is an active-site residue. Residues arginine 295, histidine 327, and serine 379 each contribute to the substrate site.

This sequence belongs to the RuBisCO large chain family. Type I subfamily. Heterohexadecamer of 8 large chains and 8 small chains. Requires Mg(2+) as cofactor.

It localises to the plastid. The protein resides in the chloroplast. The catalysed reaction is 2 (2R)-3-phosphoglycerate + 2 H(+) = D-ribulose 1,5-bisphosphate + CO2 + H2O. It catalyses the reaction D-ribulose 1,5-bisphosphate + O2 = 2-phosphoglycolate + (2R)-3-phosphoglycerate + 2 H(+). Its function is as follows. RuBisCO catalyzes two reactions: the carboxylation of D-ribulose 1,5-bisphosphate, the primary event in carbon dioxide fixation, as well as the oxidative fragmentation of the pentose substrate in the photorespiration process. Both reactions occur simultaneously and in competition at the same active site. In Bazzania trilobata (Greater whipwort), this protein is Ribulose bisphosphate carboxylase large chain.